The primary structure comprises 176 residues: Dual-action ribosomal maturation protein DarP (176 aa).

Over residues 1 to 10 (MTVPNHQQDI) the composition is skewed to polar residues. Residues 1–22 (MTVPNHQQDISDSDLESRPSKT) form a disordered region.

It belongs to the DarP family.

Its subcellular location is the cytoplasm. Functionally, member of a network of 50S ribosomal subunit biogenesis factors which assembles along the 30S-50S interface, preventing incorrect 23S rRNA structures from forming. Promotes peptidyl transferase center (PTC) maturation. In Nitrosomonas eutropha (strain DSM 101675 / C91 / Nm57), this protein is Dual-action ribosomal maturation protein DarP.